We begin with the raw amino-acid sequence, 290 residues long: Festuclavine dehydrogenase easG (290 aa).

It belongs to the fgaFS/easG family.

It carries out the reaction festuclavine + NAD(+) = 6,8-dimethyl-6,7-didehydroergoline + NADH + H(+). Its pathway is alkaloid biosynthesis; ergot alkaloid biosynthesis. In terms of biological role, festuclavine dehydrogenase; part of the gene cluster that mediates the biosynthesis of fumiclavanine C, a fungal ergot alkaloid. DmaW catalyzes the first step of ergot alkaloid biosynthesis by condensing dimethylallyl diphosphate (DMAP) and tryptophan to form 4-dimethylallyl-L-tryptophan. The second step is catalyzed by the methyltransferase easF that methylates 4-dimethylallyl-L-tryptophan in the presence of S-adenosyl-L-methionine, resulting in the formation of 4-dimethylallyl-L-abrine. The catalase easC and the FAD-dependent oxidoreductase easE then transform 4-dimethylallyl-L-abrine to chanoclavine-I which is further oxidized by EasD in the presence of NAD(+), resulting in the formation of chanoclavine-I aldehyde. EasA reduces chanoclavine-I aldehyde to dihydrochanoclavine-I aldehyde that spontaneously dehydrates to form 6,8-dimethyl-6,7-didehydroergoline. EasG then catalyzes the reduction of 6,8-dimethyl-6,7-didehydroergoline to form festuclavine. Hydrolysis of festuclavine by easM then leads to the formation of fumigaclavine B which is in turn acetylated by easN to fumigaclavine A. Finally, easL catalyzes the conversion of fumigaclavine A into fumigaclavine C by attaching a dimethylallyl moiety to C-2 of the indole nucleus. The sequence is that of Festuclavine dehydrogenase easG from Aspergillus fumigatus (strain ATCC MYA-4609 / CBS 101355 / FGSC A1100 / Af293) (Neosartorya fumigata).